The sequence spans 75 residues: Defense protein 6 (75 aa).

An N-terminal signal peptide occupies residues 1-20; the sequence is MKTCLVFAFFLVAVFAAVQA. Residues 21-32 constitute a propeptide that is removed on maturation; that stretch reads EENDSPQTLPRR. 3 cysteine pairs are disulfide-bonded: Cys-44-Cys-63, Cys-49-Cys-68, and Cys-53-Cys-70.

This sequence belongs to the invertebrate defensin family.

It is found in the secreted. In terms of biological role, has antibacterial activity. The sequence is that of Defense protein 6 from Lonomia obliqua (Moth).